Consider the following 67-residue polypeptide: Penaeidin-4d (67 aa).

Residues 1–19 form the signal peptide; the sequence is MRLLVCLVFLASFAMVCQG. Intrachain disulfides connect Cys-42–Cys-56, Cys-45–Cys-63, and Cys-57–Cys-64. Leu-66 carries the leucine amide modification.

It belongs to the penaeidin family.

Its subcellular location is the cytoplasmic granule. Antibacterial and antifungal activity. Presents chitin-binding activity. The sequence is that of Penaeidin-4d from Penaeus setiferus (Atlantic white shrimp).